The chain runs to 782 residues: Protein phosphatase 1 regulatory subunit 12C (782 aa).

Composition is skewed to low complexity over residues 1-19 (MSGE…AAAA) and 77-88 (DPGPGSGAASDP). Disordered regions lie at residues 1-45 (MSGE…GERR) and 77-98 (DPGP…RAVL). Position 2 is an N-acetylserine (Ser-2). ANK repeat units lie at residues 104-133 (DGIS…TVNQ), 137-166 (EGWT…NIAA), 230-259 (TGAS…DTEL), and 263-292 (DGWT…GMDS). The stretch at 301-332 (CDLADEDVMNLLEELAQKQEDLRNQKEGSQGR) forms a coiled coil. Residues 321 to 685 (DLRNQKEGSQ…HEEPDGGFRK (365 aa)) are disordered. Polar residues predominate over residues 332-341 (RGQESQVPSS). Residues 353–369 (SSREKISLQDLSKERRP) show a composition bias toward basic and acidic residues. The span at 401 to 413 (VSSPVSSNPKSPV) shows a compositional bias: low complexity. Phosphoserine occurs at positions 403, 411, 431, 454, and 509. Residues 451-465 (RSASSSLLEKASTQA) are compositionally biased toward polar residues. Basic and acidic residues predominate over residues 537-546 (VRDEESESQR). The segment covering 547 to 557 (KARSRLMRQSR) has biased composition (basic residues). At Thr-560 the chain carries Phosphothreonine. A Phosphoserine modification is found at Ser-647. Residues 664 to 685 (SQRDLVLESKQEHEEPDGGFRK) show a composition bias toward basic and acidic residues. Positions 681–782 (GGFRKMYTEL…LIRVISKLSK (102 aa)) form a coiled coil.

In terms of assembly, PP1 comprises a catalytic subunit, PPP1CA, PPP1CB or PPP1CC, and one or several targeting or regulatory subunits. PPP1R12C mediates binding to myosin. Interacts via its N-terminus with PPP1CB. Interacts with IL16. Interacts with the coiled-coil domain of MPRIP. Interacts with NOD2. In terms of processing, phosphorylation at Thr-560 is essential for its interaction with PPP1CB.

It is found in the cytoplasm. The protein resides in the cytoskeleton. Its subcellular location is the stress fiber. In terms of biological role, regulates myosin phosphatase activity. The sequence is that of Protein phosphatase 1 regulatory subunit 12C from Mus musculus (Mouse).